The following is a 150-amino-acid chain: UPF0756 membrane protein HI_1074 (150 aa).

Helical transmembrane passes span 1–21 (MTLQ…LGVL), 52–72 (YGVK…LVSG), 81–101 (GFLS…AWLA), and 123–143 (IIGV…AGIL).

The protein belongs to the UPF0756 family.

Its subcellular location is the cell membrane. The protein is UPF0756 membrane protein HI_1074 of Haemophilus influenzae (strain ATCC 51907 / DSM 11121 / KW20 / Rd).